We begin with the raw amino-acid sequence, 230 residues long: 7-cyano-7-deazaguanine synthase (230 aa).

9–19 (ISGGLDSTTCL) contacts ATP. Residues Cys192, Cys202, Cys205, and Cys208 each coordinate Zn(2+).

It belongs to the QueC family. Zn(2+) is required as a cofactor.

The enzyme catalyses 7-carboxy-7-deazaguanine + NH4(+) + ATP = 7-cyano-7-deazaguanine + ADP + phosphate + H2O + H(+). Its pathway is purine metabolism; 7-cyano-7-deazaguanine biosynthesis. Its function is as follows. Catalyzes the ATP-dependent conversion of 7-carboxy-7-deazaguanine (CDG) to 7-cyano-7-deazaguanine (preQ(0)). The protein is 7-cyano-7-deazaguanine synthase of Myxococcus xanthus (strain DK1622).